The primary structure comprises 232 residues: 5'-methylthioadenosine/S-adenosylhomocysteine nucleosidase (232 aa).

Glu12 (proton acceptor) is an active-site residue. Substrate-binding positions include Gly78, Ile152, and 173–174 (ME). Asp197 functions as the Proton donor in the catalytic mechanism.

This sequence belongs to the PNP/UDP phosphorylase family. MtnN subfamily. Homodimer.

It catalyses the reaction S-adenosyl-L-homocysteine + H2O = S-(5-deoxy-D-ribos-5-yl)-L-homocysteine + adenine. The catalysed reaction is S-methyl-5'-thioadenosine + H2O = 5-(methylsulfanyl)-D-ribose + adenine. It carries out the reaction 5'-deoxyadenosine + H2O = 5-deoxy-D-ribose + adenine. The protein operates within amino-acid biosynthesis; L-methionine biosynthesis via salvage pathway; S-methyl-5-thio-alpha-D-ribose 1-phosphate from S-methyl-5'-thioadenosine (hydrolase route): step 1/2. Its function is as follows. Catalyzes the irreversible cleavage of the glycosidic bond in both 5'-methylthioadenosine (MTA) and S-adenosylhomocysteine (SAH/AdoHcy) to adenine and the corresponding thioribose, 5'-methylthioribose and S-ribosylhomocysteine, respectively. Also cleaves 5'-deoxyadenosine, a toxic by-product of radical S-adenosylmethionine (SAM) enzymes, into 5-deoxyribose and adenine. Thus, is required for in vivo function of the radical SAM enzymes biotin synthase and lipoic acid synthase, that are inhibited by 5'-deoxyadenosine accumulation. The sequence is that of 5'-methylthioadenosine/S-adenosylhomocysteine nucleosidase from Pectobacterium carotovorum subsp. carotovorum (strain PC1).